The primary structure comprises 240 residues: MSPLLFGAGLVVLNLVTSARSQKTEPLSGSGDQPLFRGADRYDFAIMIPPGGTECFWQFAHQTGYFYFSYEVQRTVGMSHDRHVAATAHNPQGFLIDTSQGVRGQINFSTQETGFYQLCLSNQHNHFGSVQVYLNFGVFYEGPETDHKQKERKQLNDTLDAIEDGTQKVQNNIFHMWRYYNFARMRKMADFFLIQSNYNYVNWWSTAQSLVIILSGILQLYFLKRLFNVPTTTDTKKPRC.

The N-terminal stretch at 1-21 is a signal peptide; it reads MSPLLFGAGLVVLNLVTSARS. Residues 22–200 are Lumenal-facing; it reads QKTEPLSGSG…FFLIQSNYNY (179 aa). The region spanning 53–138 is the GOLD domain; the sequence is TECFWQFAHQ…SVQVYLNFGV (86 aa). N-linked (GlcNAc...) asparagine glycans are attached at residues Asn107 and Asn156. Residues 201–223 traverse the membrane as a helical segment; it reads VNWWSTAQSLVIILSGILQLYFL. Residues 224 to 240 are Cytoplasmic-facing; the sequence is KRLFNVPTTTDTKKPRC.

It belongs to the EMP24/GP25L family.

Its subcellular location is the endoplasmic reticulum membrane. This chain is Transmembrane emp24 domain-containing protein 6 (TMED6), found in Homo sapiens (Human).